We begin with the raw amino-acid sequence, 126 residues long: Protein K7 (126 aa).

Residues 24–44 (LPLHLWILCSLLAFLPLLVFI) traverse the membrane as a helical segment.

Interacts with host CAMLG; this interaction allows efficient apoptosis inhibition. Additionally, interacts with vGPCR/ORF74 and induces its proteasomeal degradation.

It localises to the host membrane. Its subcellular location is the host mitochondrion. Functionally, plays a role in the inhibition of host apoptosis to allow completion of the viral lytic replication and may thus favor the maintenance of persistent infection in infected host. This is Protein K7 (K7) from Homo sapiens (Human).